We begin with the raw amino-acid sequence, 1385 residues long: L-2-aminoadipate reductase large subunit (1385 aa).

Positions 843–920 (SSFSPLEQEI…ELAKEISRVR (78 aa)) constitute a Carrier domain. S880 bears the O-(pantetheine 4'-phosphoryl)serine mark.

Belongs to the ATP-dependent AMP-binding enzyme family. As to quaternary structure, heterodimer of an alpha and a beta subunit. Pantetheine 4'-phosphate is required as a cofactor.

It catalyses the reaction (S)-2-amino-6-oxohexanoate + NADP(+) + H2O = L-2-aminoadipate + NADPH + 2 H(+). The catalysed reaction is (S)-2-amino-6-oxohexanoate + NAD(+) + H2O = L-2-aminoadipate + NADH + 2 H(+). It carries out the reaction (S)-2-amino-6-oxohexanoate + AMP + diphosphate + NADP(+) = L-2-aminoadipate + ATP + NADPH + H(+). It participates in amino-acid biosynthesis; L-lysine biosynthesis via AAA pathway; L-lysine from L-alpha-aminoadipate (fungal route): step 1/3. Catalyzes the activation of alpha-aminoadipate by ATP-dependent adenylation and the reduction of activated alpha-aminoadipate by NADPH. The activated alpha-aminoadipate is bound to the phosphopantheinyl group of the enzyme itself before it is reduced to (S)-2-amino-6-oxohexanoate. The sequence is that of L-2-aminoadipate reductase large subunit (LYS2) from Eremothecium gossypii (strain ATCC 10895 / CBS 109.51 / FGSC 9923 / NRRL Y-1056) (Yeast).